Here is a 95-residue protein sequence, read N- to C-terminus: Aspartyl/glutamyl-tRNA(Asn/Gln) amidotransferase subunit C (95 aa).

Belongs to the GatC family. In terms of assembly, heterotrimer of A, B and C subunits.

It carries out the reaction L-glutamyl-tRNA(Gln) + L-glutamine + ATP + H2O = L-glutaminyl-tRNA(Gln) + L-glutamate + ADP + phosphate + H(+). It catalyses the reaction L-aspartyl-tRNA(Asn) + L-glutamine + ATP + H2O = L-asparaginyl-tRNA(Asn) + L-glutamate + ADP + phosphate + 2 H(+). Its function is as follows. Allows the formation of correctly charged Asn-tRNA(Asn) or Gln-tRNA(Gln) through the transamidation of misacylated Asp-tRNA(Asn) or Glu-tRNA(Gln) in organisms which lack either or both of asparaginyl-tRNA or glutaminyl-tRNA synthetases. The reaction takes place in the presence of glutamine and ATP through an activated phospho-Asp-tRNA(Asn) or phospho-Glu-tRNA(Gln). This chain is Aspartyl/glutamyl-tRNA(Asn/Gln) amidotransferase subunit C, found in Rhodopseudomonas palustris (strain ATCC BAA-98 / CGA009).